The chain runs to 65 residues: Small ribosomal subunit protein eS27 (65 aa).

Residues cysteine 21, cysteine 24, cysteine 40, and cysteine 43 each contribute to the Zn(2+) site. A C4-type zinc finger spans residues 21–43 (CKDCGNVQVVFARPSSVVTCNIC).

It belongs to the eukaryotic ribosomal protein eS27 family. As to quaternary structure, part of the 30S ribosomal subunit. Zn(2+) serves as cofactor.

The protein is Small ribosomal subunit protein eS27 of Thermoplasma volcanium (strain ATCC 51530 / DSM 4299 / JCM 9571 / NBRC 15438 / GSS1).